The primary structure comprises 157 residues: S-ribosylhomocysteine lyase (157 aa).

Fe cation is bound by residues His-54, His-58, and Cys-126.

This sequence belongs to the LuxS family. In terms of assembly, homodimer. It depends on Fe cation as a cofactor.

The enzyme catalyses S-(5-deoxy-D-ribos-5-yl)-L-homocysteine = (S)-4,5-dihydroxypentane-2,3-dione + L-homocysteine. In terms of biological role, involved in the synthesis of autoinducer 2 (AI-2) which is secreted by bacteria and is used to communicate both the cell density and the metabolic potential of the environment. The regulation of gene expression in response to changes in cell density is called quorum sensing. Catalyzes the transformation of S-ribosylhomocysteine (RHC) to homocysteine (HC) and 4,5-dihydroxy-2,3-pentadione (DPD). The chain is S-ribosylhomocysteine lyase from Bacillus cereus (strain G9842).